The chain runs to 356 residues: Alanine racemase, catabolic (356 aa).

Lys35 serves as the catalytic Proton acceptor; specific for D-alanine. Position 35 is an N6-(pyridoxal phosphate)lysine (Lys35). Arg130 lines the substrate pocket. Residue Tyr253 is the Proton acceptor; specific for L-alanine of the active site. Substrate is bound at residue Met301.

It belongs to the alanine racemase family. Pyridoxal 5'-phosphate serves as cofactor.

The enzyme catalyses L-alanine = D-alanine. Isomerizes L-alanine to D-alanine which is then oxidized to pyruvate by DadA. This is Alanine racemase, catabolic (dadX) from Escherichia coli (strain K12).